We begin with the raw amino-acid sequence, 183 residues long: MTAQGSLVANRGRRFKWAIELSGPGGGSRGRSDRGGGQGDSLYPVGYLDKQVPDTSVQETDRILVEKRCWDIALGPLKQIPMNLFIMYMAGNTISIFPTMMVCMMAWRPIQALMAISATFKMLESSSQKFLQGLVYLIGNLMGLALAVYKCQSMGLLPTHASDWLAFIEPPERMEFSGGGLLL.

N-acetylthreonine is present on Thr-2. Topologically, residues 2–66 (TAQGSLVANR…VQETDRILVE (65 aa)) are cytoplasmic. Residues 67–87 (KRCWDIALGPLKQIPMNLFIM) form a helical membrane-spanning segment. At 88-98 (YMAGNTISIFP) the chain is on the lumenal side. Residues 99–120 (TMMVCMMAWRPIQALMAISATF) form a helical membrane-spanning segment. Topologically, residues 121–127 (KMLESSS) are cytoplasmic. Residues 128–148 (QKFLQGLVYLIGNLMGLALAV) form a helical membrane-spanning segment. Over 149–183 (YKCQSMGLLPTHASDWLAFIEPPERMEFSGGGLLL) the chain is Lumenal.

It belongs to the EMC4 family. Component of the ER membrane protein complex (EMC).

It localises to the endoplasmic reticulum membrane. In terms of biological role, part of the endoplasmic reticulum membrane protein complex (EMC) that enables the energy-independent insertion into endoplasmic reticulum membranes of newly synthesized membrane proteins. Preferentially accommodates proteins with transmembrane domains that are weakly hydrophobic or contain destabilizing features such as charged and aromatic residues. Involved in the cotranslational insertion of multi-pass membrane proteins in which stop-transfer membrane-anchor sequences become ER membrane spanning helices. It is also required for the post-translational insertion of tail-anchored/TA proteins in endoplasmic reticulum membranes. By mediating the proper cotranslational insertion of N-terminal transmembrane domains in an N-exo topology, with translocated N-terminus in the lumen of the ER, controls the topology of multi-pass membrane proteins like the G protein-coupled receptors. By regulating the insertion of various proteins in membranes, it is indirectly involved in many cellular processes. The sequence is that of ER membrane protein complex subunit 4 (EMC4) from Bos taurus (Bovine).